Here is a 475-residue protein sequence, read N- to C-terminus: Rho GTPase-activating protein 15 (475 aa).

The segment at 1-22 (MERSTTSDTASEKPNPSHSTGA) is disordered. Residues 80 to 190 (VVEKEGYLLK…WFHAIKNAID (111 aa)) enclose the PH domain. The Rho-GAP domain maps to 281-470 (SHLHLVCEHE…LMLSEYSKIF (190 aa)).

It localises to the cytoplasm. The protein localises to the membrane. In terms of biological role, GTPase activator for the Rho-type GTPases by converting them to an inactive GDP-bound state. This Gallus gallus (Chicken) protein is Rho GTPase-activating protein 15 (ARHGAP15).